Consider the following 484-residue polypeptide: Adenylosuccinate synthetase, chloroplastic (484 aa).

Residues M1 to S44 constitute a chloroplast transit peptide. GTP-binding positions include G71 to K77 and G99 to T101. D72 (proton acceptor) is an active-site residue. 2 residues coordinate Mg(2+): D72 and G99. IMP contacts are provided by residues D72–K75, N97–H100, T189, R203, Q283, T298, and R362. The active-site Proton donor is the H100. T358–R364 is a substrate binding site. Residues R364, K390–D392, and G473–G475 each bind GTP.

Belongs to the adenylosuccinate synthetase family. In terms of assembly, homodimer. It depends on Mg(2+) as a cofactor.

The protein resides in the plastid. It is found in the chloroplast. The enzyme catalyses IMP + L-aspartate + GTP = N(6)-(1,2-dicarboxyethyl)-AMP + GDP + phosphate + 2 H(+). It participates in purine metabolism; AMP biosynthesis via de novo pathway; AMP from IMP: step 1/2. Functionally, plays an important role in the de novo pathway and in the salvage pathway of purine nucleotide biosynthesis. Catalyzes the first committed step in the biosynthesis of AMP from IMP. This chain is Adenylosuccinate synthetase, chloroplastic, found in Zea mays (Maize).